We begin with the raw amino-acid sequence, 246 residues long: uncharacterized protein (246 aa).

The protein belongs to the BtpA family.

This is an uncharacterized protein from Archaeoglobus fulgidus (strain ATCC 49558 / DSM 4304 / JCM 9628 / NBRC 100126 / VC-16).